The sequence spans 337 residues: tRNA N6-adenosine threonylcarbamoyltransferase (337 aa).

Residues H111 and H115 each contribute to the Fe cation site. Residues 134 to 138, D167, G180, and N272 contribute to the substrate site; that span reads LVSGG. D300 serves as a coordination point for Fe cation.

It belongs to the KAE1 / TsaD family. Requires Fe(2+) as cofactor.

The protein localises to the cytoplasm. The enzyme catalyses L-threonylcarbamoyladenylate + adenosine(37) in tRNA = N(6)-L-threonylcarbamoyladenosine(37) in tRNA + AMP + H(+). Required for the formation of a threonylcarbamoyl group on adenosine at position 37 (t(6)A37) in tRNAs that read codons beginning with adenine. Is involved in the transfer of the threonylcarbamoyl moiety of threonylcarbamoyl-AMP (TC-AMP) to the N6 group of A37, together with TsaE and TsaB. TsaD likely plays a direct catalytic role in this reaction. The polypeptide is tRNA N6-adenosine threonylcarbamoyltransferase (Pseudoalteromonas translucida (strain TAC 125)).